Here is an 85-residue protein sequence, read N- to C-terminus: Teretoxin Tan9.6 (85 aa).

Residues 1-21 form the signal peptide; the sequence is MMSKTGALLLTFMILVLFSMA. Residues 22–52 constitute a propeptide that is removed on maturation; the sequence is AADALGERFEDHEQKIREQDAGVGLLSLMGR.

Post-translationally, contains 3 disulfide bonds. Expressed by the venom duct.

The protein resides in the secreted. This chain is Teretoxin Tan9.6, found in Terebra anilis (Auger snail).